We begin with the raw amino-acid sequence, 447 residues long: Phosphoglucosamine mutase (447 aa).

Ser-103 serves as the catalytic Phosphoserine intermediate. Ser-103, Asp-242, Asp-244, and Asp-246 together coordinate Mg(2+). Ser-103 carries the phosphoserine modification.

It belongs to the phosphohexose mutase family. It depends on Mg(2+) as a cofactor. Post-translationally, activated by phosphorylation.

The catalysed reaction is alpha-D-glucosamine 1-phosphate = D-glucosamine 6-phosphate. Functionally, catalyzes the conversion of glucosamine-6-phosphate to glucosamine-1-phosphate. The protein is Phosphoglucosamine mutase of Jannaschia sp. (strain CCS1).